The primary structure comprises 277 residues: Shikimate dehydrogenase (NADP(+)) (277 aa).

Residues 17–19 and Thr64 each bind shikimate; that span reads SRS. The active-site Proton acceptor is the Lys68. Positions 88 and 103 each coordinate shikimate. Residues 128–132, 152–157, and Leu217 each bind NADP(+); these read GAGGS and NRTLDR. Tyr219 contributes to the shikimate binding site. Position 240 (Gly240) interacts with NADP(+).

It belongs to the shikimate dehydrogenase family. Homodimer.

It carries out the reaction shikimate + NADP(+) = 3-dehydroshikimate + NADPH + H(+). The protein operates within metabolic intermediate biosynthesis; chorismate biosynthesis; chorismate from D-erythrose 4-phosphate and phosphoenolpyruvate: step 4/7. Involved in the biosynthesis of the chorismate, which leads to the biosynthesis of aromatic amino acids. Catalyzes the reversible NADPH linked reduction of 3-dehydroshikimate (DHSA) to yield shikimate (SA). The sequence is that of Shikimate dehydrogenase (NADP(+)) from Rhodopseudomonas palustris (strain BisB18).